We begin with the raw amino-acid sequence, 550 residues long: Membrane protein insertase YidC (550 aa).

The chain crosses the membrane as a helical span at residues 3 to 23 (IKRTVLWVIFFMSAVMLFDNW). Positions 34 to 73 (FPSATQTKTAAPAAPGSSTTASQPTDLPQTTAAAPGSTTP) are disordered. Positions 35–73 (PSATQTKTAAPAAPGSSTTASQPTDLPQTTAAAPGSTTP) are enriched in low complexity. Transmembrane regions (helical) follow at residues 363-383 (WGWA…PLSA), 429-449 (FGGC…YWVL), 472-492 (PYFI…KLNP), and 503-523 (MMFM…GLVL).

This sequence belongs to the OXA1/ALB3/YidC family. Type 1 subfamily. In terms of assembly, interacts with the Sec translocase complex via SecD. Specifically interacts with transmembrane segments of nascent integral membrane proteins during membrane integration.

The protein localises to the cell inner membrane. Its function is as follows. Required for the insertion and/or proper folding and/or complex formation of integral membrane proteins into the membrane. Involved in integration of membrane proteins that insert both dependently and independently of the Sec translocase complex, as well as at least some lipoproteins. Aids folding of multispanning membrane proteins. The polypeptide is Membrane protein insertase YidC (Paraburkholderia phymatum (strain DSM 17167 / CIP 108236 / LMG 21445 / STM815) (Burkholderia phymatum)).